The chain runs to 461 residues: ERBB receptor feedback inhibitor 1 (461 aa).

Residue S2 is modified to N-acetylserine. Phosphothreonine is present on residues T126 and T130. The disordered stretch occupies residues 228 to 353 (QNRVVPDPNP…VMPPTQSFAP (126 aa)). Residues S251 and S272 each carry the phosphoserine modification. Positions 265–274 (SSCTHRASPS) are enriched in polar residues. A compositionally biased stretch (pro residues) spans 283 to 292 (PPRVPIPPRP). A Phosphoserine modification is found at S301. Residues 311–324 (DEDRPPKVPPREPL) show a composition bias toward basic and acidic residues. The segment covering 325-336 (SRSNSRTPSPKS) has biased composition (polar residues). The interaction with EGFR and ERBB2 and regulation of EGFR activation stretch occupies residues 333-362 (SPKSLPSYLNGVMPPTQSFAPDPKYVSSKA). Phosphoserine is present on S460.

It belongs to the MIG6 family. As to quaternary structure, interacts with EGFR. Interacts with ERBB2. In terms of tissue distribution, detected in lung, in airway epithelial cells and alveolar type 2 cells (at protein level). Detected in uterus stroma, luminal epithelium and glandular epithelium.

The protein resides in the cytoplasm. It is found in the cell membrane. The protein localises to the nucleus. In terms of biological role, negative regulator of EGFR signaling in skin morphogenesis. Acts as a negative regulator for several EGFR family members, including ERBB2, ERBB3 and ERBB4. Inhibits EGFR catalytic activity by interfering with its dimerization. Inhibits autophosphorylation of EGFR, ERBB2 and ERBB4. Important for normal keratinocyte proliferation and differentiation. Plays a role in modulating the response to steroid hormones in the uterus. Required for normal response to progesterone in the uterus and for fertility. Mediates epithelial estrogen responses in the uterus by regulating ESR1 levels and activation. Important for regulation of endometrium cell proliferation. Important for normal prenatal and perinatal lung development. The sequence is that of ERBB receptor feedback inhibitor 1 (Errfi1) from Mus musculus (Mouse).